The primary structure comprises 157 residues: Ribonuclease (157 aa).

An N-terminal signal peptide occupies residues Met1–Ala34. Residues Ala35–Glu47 constitute a propeptide that is removed on maturation. The active-site Proton acceptor is the Glu120. The active-site Proton donor is the His149.

The protein belongs to the ribonuclease N1/T1 family.

The protein resides in the secreted. Its function is as follows. Hydrolyzes phosphodiester bonds in RNA, poly- and oligoribonucleotides resulting in 3'-nucleoside monophosphates via 2',3'-cyclophosphate intermediates. This chain is Ribonuclease, found in Bacillus amyloliquefaciens (Bacillus velezensis).